A 554-amino-acid polypeptide reads, in one-letter code: Glucose-6-phosphate isomerase (554 aa).

The Proton donor role is filled by Glu-359. Residues His-390 and Lys-518 contribute to the active site.

This sequence belongs to the GPI family.

The protein localises to the cytoplasm. It catalyses the reaction alpha-D-glucose 6-phosphate = beta-D-fructose 6-phosphate. It functions in the pathway carbohydrate biosynthesis; gluconeogenesis. Its pathway is carbohydrate degradation; glycolysis; D-glyceraldehyde 3-phosphate and glycerone phosphate from D-glucose: step 2/4. Functionally, catalyzes the reversible isomerization of glucose-6-phosphate to fructose-6-phosphate. This chain is Glucose-6-phosphate isomerase, found in Pseudomonas fluorescens (strain ATCC BAA-477 / NRRL B-23932 / Pf-5).